The following is a 171-amino-acid chain: Cation channel sperm-associated auxiliary subunit TMEM249 (171 aa).

Residues 1-2 (ML) are Cytoplasmic-facing. Residues 3–17 (FIICLVFISCNVLRE) traverse the membrane as a helical segment. Over 18-28 (VKYQETWCFPA) the chain is Extracellular. A helical membrane pass occupies residues 29-40 (YGMVIGLWLMLS). Over 41–171 (SIPQRRLVLN…TKSSVNDLDV (131 aa)) the chain is Cytoplasmic.

As to quaternary structure, component of the CatSper complex or CatSpermasome composed of the core pore-forming members CATSPER1, CATSPER2, CATSPER3 and CATSPER4 as well as auxiliary members CATSPERB, CATSPERG2, CATSPERD, CATSPERE, CATSPERZ, C2CD6/CATSPERT, SLCO6C1, TMEM249, TMEM262 and EFCAB9. HSPA1 may be an additional auxiliary complex member. The core complex members CATSPER1, CATSPER2, CATSPER3 and CATSPER4 form a heterotetrameric channel. The auxiliary CATSPERB, CATSPERG2, CATSPERD and CATSPERE subunits form a pavilion-like structure over the pore which stabilizes the complex through interactions with CATSPER4, CATSPER3, CATSPER1 and CATSPER2 respectively. SLCO6C1 interacts with CATSPERE and TMEM262/CATSPERH interacts with CATSPERB, further stabilizing the complex. C2CD6/CATSPERT interacts at least with CATSPERD and is required for targeting the CatSper complex in the flagellar membrane.

The protein localises to the cell projection. It localises to the cilium. The protein resides in the flagellum membrane. Functionally, auxiliary component of the CatSper complex, a complex involved in sperm cell hyperactivation. This is Cation channel sperm-associated auxiliary subunit TMEM249 from Mus musculus (Mouse).